The sequence spans 291 residues: 4-hydroxy-tetrahydrodipicolinate synthase (291 aa).

Thr45 contributes to the pyruvate binding site. Tyr133 functions as the Proton donor/acceptor in the catalytic mechanism. Lys161 functions as the Schiff-base intermediate with substrate in the catalytic mechanism. Residue Ile203 participates in pyruvate binding.

The protein belongs to the DapA family. Homotetramer.

The protein resides in the cytoplasm. The catalysed reaction is L-aspartate 4-semialdehyde + pyruvate = (2S,4S)-4-hydroxy-2,3,4,5-tetrahydrodipicolinate + H2O + H(+). It functions in the pathway amino-acid biosynthesis; L-lysine biosynthesis via DAP pathway; (S)-tetrahydrodipicolinate from L-aspartate: step 3/4. Its activity is regulated as follows. Is allosterically feedback inhibited by lysine; the N.meningitidis enzyme is significantly more sensitive to lysine than the E.coli enzyme. Shows substrate inhibition by (S)-ASA, with a Ki of 1.7 mM. Catalyzes the condensation of (S)-aspartate-beta-semialdehyde [(S)-ASA] and pyruvate to 4-hydroxy-tetrahydrodipicolinate (HTPA). The chain is 4-hydroxy-tetrahydrodipicolinate synthase from Neisseria meningitidis serogroup B (strain ATCC BAA-335 / MC58).